Here is a 436-residue protein sequence, read N- to C-terminus: tRNA-2-methylthio-N(6)-dimethylallyladenosine synthase (436 aa).

Residues 1 to 115 (MRVFFKTYGC…IAEVLQKAAR (115 aa)) form the MTTase N-terminal domain. [4Fe-4S] cluster contacts are provided by Cys-10, Cys-46, Cys-80, Cys-151, Cys-155, and Cys-158. The region spanning 137-368 (RFSKHHAWIT…LELQKQINRE (232 aa)) is the Radical SAM core domain. The 62-residue stretch at 371–432 (MQYLGKVVEI…AGPLYGKLQK (62 aa)) folds into the TRAM domain.

The protein belongs to the methylthiotransferase family. MiaB subfamily. As to quaternary structure, monomer. The cofactor is [4Fe-4S] cluster.

It is found in the cytoplasm. The enzyme catalyses N(6)-dimethylallyladenosine(37) in tRNA + (sulfur carrier)-SH + AH2 + 2 S-adenosyl-L-methionine = 2-methylsulfanyl-N(6)-dimethylallyladenosine(37) in tRNA + (sulfur carrier)-H + 5'-deoxyadenosine + L-methionine + A + S-adenosyl-L-homocysteine + 2 H(+). Its function is as follows. Catalyzes the methylthiolation of N6-(dimethylallyl)adenosine (i(6)A), leading to the formation of 2-methylthio-N6-(dimethylallyl)adenosine (ms(2)i(6)A) at position 37 in tRNAs that read codons beginning with uridine. The protein is tRNA-2-methylthio-N(6)-dimethylallyladenosine synthase of Pseudothermotoga lettingae (strain ATCC BAA-301 / DSM 14385 / NBRC 107922 / TMO) (Thermotoga lettingae).